We begin with the raw amino-acid sequence, 451 residues long: Protoheme IX farnesyltransferase, mitochondrial (451 aa).

6 helical membrane-spanning segments follow: residues 149-169 (TILV…PATV), 240-260 (PTVA…YTSL), 265-285 (IINT…GWAA), 289-309 (LTHP…FPHF), 339-359 (VALR…YFNI), and 414-434 (KAFF…ILHK).

This sequence belongs to the UbiA prenyltransferase family.

It is found in the mitochondrion membrane. Functionally, converts protoheme IX and farnesyl diphosphate to heme O. The polypeptide is Protoheme IX farnesyltransferase, mitochondrial (COX10) (Candida glabrata (strain ATCC 2001 / BCRC 20586 / JCM 3761 / NBRC 0622 / NRRL Y-65 / CBS 138) (Yeast)).